A 233-amino-acid polypeptide reads, in one-letter code: MTKLSKRVKVIQSKIDRNKFYSLDDALNLVKECATAKFDESIDVAVQLGIDAKKSDQVVRGAVVLPAGTGKYVRVAVFAQGEKAEQAKAAGAEIVGMEDLADQIKSGKIDFDVLIASPDTMKIVGTLGQVLGPRGLMPNPKVGTVTPDVATAVKNAKAGQVQFRVDKAGIVHASIGRRSFEPTALKSNLLALLEALNKAKPPASKGVYLKKVAVSSTMGAGVRVDQASLQAAA.

This sequence belongs to the universal ribosomal protein uL1 family. In terms of assembly, part of the 50S ribosomal subunit.

In terms of biological role, binds directly to 23S rRNA. The L1 stalk is quite mobile in the ribosome, and is involved in E site tRNA release. Functionally, protein L1 is also a translational repressor protein, it controls the translation of the L11 operon by binding to its mRNA. This chain is Large ribosomal subunit protein uL1, found in Polynucleobacter necessarius subsp. necessarius (strain STIR1).